An 802-amino-acid chain; its full sequence is Ribosomal protein S6 kinase alpha-5 (802 aa).

The segment covering 1 to 22 (MEEEGGSSGGAAGTSADGGDGG) has biased composition (gly residues). The disordered stretch occupies residues 1–23 (MEEEGGSSGGAAGTSADGGDGGE). Residues 49–318 (FELLKVLGTG…ADEIKEHLFF (270 aa)) enclose the Protein kinase 1 domain. ATP is bound by residues 55 to 63 (LGTGAYGKV) and Lys-81. Asp-177 (proton acceptor) is an active-site residue. Ser-212 bears the Phosphoserine; by autocatalysis mark. The AGC-kinase C-terminal domain maps to 319 to 387 (QKINWDDLAA…VAPSILFKRN (69 aa)). Ser-360 carries the post-translational modification Phosphoserine; by MAPK1, MAPK3 and MAPK14. A phosphoserine; by autocatalysis mark is found at Ser-376 and Ser-381. In terms of domain architecture, Protein kinase 2 spans 426–687 (DLKDKPLGEG…MSGLRYNEWL (262 aa)). ATP-binding positions include 432–440 (LGEGSFSIC) and Lys-455. The active-site Proton acceptor is the Asp-544. Residue Thr-581 is modified to Phosphothreonine; by MAPK1, MAPK3 and MAPK14. 4 positions are modified to phosphoserine: Ser-647, Ser-657, Ser-691, and Ser-695. Thr-700 carries the post-translational modification Phosphothreonine; by MAPK1, MAPK3 and MAPK14. Residues 741–802 (AKRRKMKKTS…TLFQFSDSVA (62 aa)) form a disordered region. Over residues 749–779 (TSTSTETRSSSSESSHSSSSHSHGKTTPTKT) the composition is skewed to low complexity. Phosphoserine; by autocatalysis is present on residues Ser-750, Ser-752, and Ser-758. The span at 780 to 802 (LQPSNPADSNNPETLFQFSDSVA) shows a compositional bias: polar residues. A Phosphoserine modification is found at Ser-798.

It belongs to the protein kinase superfamily. AGC Ser/Thr protein kinase family. S6 kinase subfamily. Forms a complex with either MAPK1/ERK2 or MAPK3/ERK1 in quiescent cells which transiently dissociates following mitogenic stimulation. Also associates with MAPK14/p38-alpha. Activated RPS6KA5 associates with and phosphorylates the NF-kappa-B p65 subunit RELA. Interacts with CREBBP and EP300. Mg(2+) is required as a cofactor. In terms of processing, ser-376 and Thr-581 phosphorylation is required for kinase activity. Ser-376 and Ser-212 are autophosphorylated by the C-terminal kinase domain, and their phosphorylation is essential for the catalytic activity of the N-terminal kinase domain. Phosphorylated at Ser-360, Thr-581 and Thr-700 by MAPK1/ERK2, MAPK3/ERK1 and MAPK14/p38-alpha. Autophosphorylated at Ser-750, Ser-752 and Ser-758 by the N-terminal kinase domain. Ubiquitinated. Widely expressed with high levels in heart, brain and placenta. Less abundant in lung, kidney and liver.

It is found in the nucleus. The protein resides in the cytoplasm. The catalysed reaction is L-seryl-[protein] + ATP = O-phospho-L-seryl-[protein] + ADP + H(+). The enzyme catalyses L-threonyl-[protein] + ATP = O-phospho-L-threonyl-[protein] + ADP + H(+). Its activity is regulated as follows. Activated by phosphorylation at Ser-360, Thr-581 and Thr-700 by MAPK1/ERK2, MAPK3/ERK1 and MAPK14/p38-alpha, and by further autophosphorylation of Ser-212, Ser-376 and Ser-381 by the activated C-terminal kinase domain. The active N-terminal kinase domain finally phosphorylates downstream substrates, as well as Ser-750, Ser-752 and Ser-758 in its own C-terminal region. Its function is as follows. Serine/threonine-protein kinase that is required for the mitogen or stress-induced phosphorylation of the transcription factors CREB1 and ATF1 and for the regulation of the transcription factors RELA, STAT3 and ETV1/ER81, and that contributes to gene activation by histone phosphorylation and functions in the regulation of inflammatory genes. Phosphorylates CREB1 and ATF1 in response to mitogenic or stress stimuli such as UV-C irradiation, epidermal growth factor (EGF) and anisomycin. Plays an essential role in the control of RELA transcriptional activity in response to TNF and upon glucocorticoid, associates in the cytoplasm with the glucocorticoid receptor NR3C1 and contributes to RELA inhibition and repression of inflammatory gene expression. In skeletal myoblasts is required for phosphorylation of RELA at 'Ser-276' during oxidative stress. In erythropoietin-stimulated cells, is necessary for the 'Ser-727' phosphorylation of STAT3 and regulation of its transcriptional potential. Phosphorylates ETV1/ER81 at 'Ser-191' and 'Ser-216', and thereby regulates its ability to stimulate transcription, which may be important during development and breast tumor formation. Directly represses transcription via phosphorylation of 'Ser-1' of histone H2A. Phosphorylates 'Ser-10' of histone H3 in response to mitogenics, stress stimuli and EGF, which results in the transcriptional activation of several immediate early genes, including proto-oncogenes c-fos/FOS and c-jun/JUN. May also phosphorylate 'Ser-28' of histone H3. Mediates the mitogen- and stress-induced phosphorylation of high mobility group protein 1 (HMGN1/HMG14). In lipopolysaccharide-stimulated primary macrophages, acts downstream of the Toll-like receptor TLR4 to limit the production of pro-inflammatory cytokines. Functions probably by inducing transcription of the MAP kinase phosphatase DUSP1 and the anti-inflammatory cytokine interleukin 10 (IL10), via CREB1 and ATF1 transcription factors. Plays a role in neuronal cell death by mediating the downstream effects of excitotoxic injury. Phosphorylates TRIM7 at 'Ser-107' in response to growth factor signaling via the MEK/ERK pathway, thereby stimulating its ubiquitin ligase activity. The protein is Ribosomal protein S6 kinase alpha-5 (RPS6KA5) of Homo sapiens (Human).